A 249-amino-acid chain; its full sequence is Probable transcriptional regulatory protein Dtur_1615 (249 aa).

Belongs to the TACO1 family.

The protein localises to the cytoplasm. This is Probable transcriptional regulatory protein Dtur_1615 from Dictyoglomus turgidum (strain DSM 6724 / Z-1310).